Consider the following 337-residue polypeptide: Eukaryotic translation initiation factor 3 subunit H (337 aa).

One can recognise an MPN domain in the interval 21-153 (VQCDGLAVMK…LKAYRLTPQA (133 aa)).

It belongs to the eIF-3 subunit H family. Component of the eukaryotic translation initiation factor 3 (eIF-3) complex. The eIF-3 complex interacts with pix. Interacts with mxt.

It is found in the cytoplasm. Component of the eukaryotic translation initiation factor 3 (eIF-3) complex, which is involved in protein synthesis of a specialized repertoire of mRNAs and, together with other initiation factors, stimulates binding of mRNA and methionyl-tRNAi to the 40S ribosome. The eIF-3 complex specifically targets and initiates translation of a subset of mRNAs involved in cell proliferation. This chain is Eukaryotic translation initiation factor 3 subunit H, found in Drosophila pseudoobscura pseudoobscura (Fruit fly).